We begin with the raw amino-acid sequence, 272 residues long: Aquaporin FA-CHIP (272 aa).

Topologically, residues M1–E17 are cytoplasmic. A helical transmembrane segment spans residues F18–F35. Residues N36–D52 lie on the Extracellular side of the membrane. An N-linked (GlcNAc...) asparagine glycan is attached at N44. A helical transmembrane segment spans residues I53–V71. The Cytoplasmic portion of the chain corresponds to G72 to K97. The short motif at N80–A82 is the NPA 1 element. Residues A98–I119 traverse the membrane as a helical segment. The Extracellular segment spans residues T120–A139. N125 carries an N-linked (GlcNAc...) asparagine glycan. Residues G140–V160 form a helical membrane-spanning segment. Residues T161–V168 are Cytoplasmic-facing. A helical transmembrane segment spans residues S169–I188. The Extracellular segment spans residues D189–W214. Residues N196–A198 carry the NPA 2 motif. Residue N209 is glycosylated (N-linked (GlcNAc...) asparagine). Residues I215–A236 form a helical membrane-spanning segment. Over P237 to K272 the chain is Cytoplasmic.

Belongs to the MIP/aquaporin (TC 1.A.8) family.

It is found in the membrane. Functionally, forms a water-specific channel. In Pelophylax lessonae (Pool frog), this protein is Aquaporin FA-CHIP (AQPA).